Reading from the N-terminus, the 246-residue chain is Transmembrane and ubiquitin-like domain-containing protein 1 (246 aa).

The required to release iHOPS from membranes stretch occupies residues 2-30 (TLIEGVGDEVTVLFSVLACLLVLALAWVS). The chain crosses the membrane as a helical span at residues 11-31 (VTVLFSVLACLLVLALAWVST). A disordered region spans residues 34–101 (AEGGDPLPQP…TPPAPDSPQE (68 aa)). The span at 40 to 50 (LPQPSGTPTPS) shows a compositional bias: pro residues. Residue T71 is modified to Phosphothreonine. S73 is modified (phosphoserine). Residue T92 is modified to Phosphothreonine. S98 and S127 each carry phosphoserine. One can recognise a Ubiquitin-like domain in the interval 103–176 (LVLRLKFLND…LHCHVSTRVG (74 aa)). 2 helical membrane passes run 195–215 (IGSLLLPLLLLLLLLLWYCQI) and 221–241 (FPLTATLGLAGFTLLLSLLAF).

As to quaternary structure, interacts with EEF1A1, GRIA2, GRIP1, CAMLG, TUBG1. Interacts with NPM1 and CDKN2A; TMUB1 can enhance interaction between NPM1 and CDKN2A and is proposed to bridge the proteins; proposed to be mediated by iHOPS. Interacts with ERLIN2 and AMFR; TMUB1 promotes the interaction of ERLIN2 with AMFR. Post-translationally, processed by regulated intramembrane proteolysis (RIP)in the N-terminus to release iHOPS from membranes. As to expression, ubiquitously expressed with highest levels in mammary and thyroid glands, bone marrow and spleen; limited expression in cardiac, pancreatic and ovarian tissues.

It localises to the membrane. It is found in the postsynaptic cell membrane. Its subcellular location is the recycling endosome. The protein localises to the cytoplasm. The protein resides in the nucleus. It localises to the nucleolus. It is found in the cytoskeleton. Its subcellular location is the microtubule organizing center. The protein localises to the centrosome. Functionally, involved in sterol-regulated ubiquitination and degradation of HMG-CoA reductase HMGCR. Involved in positive regulation of AMPA-selective glutamate receptor GRIA2 recycling to the cell surface. Acts as a negative regulator of hepatocyte growth during regeneration. May contribute to the regulation of translation during cell-cycle progression. May contribute to the regulation of cell proliferation. May be involved in centrosome assembly. Modulates stabilization and nucleolar localization of tumor suppressor CDKN2A and enhances association between CDKN2A and NPM1. In Homo sapiens (Human), this protein is Transmembrane and ubiquitin-like domain-containing protein 1 (TMUB1).